The chain runs to 231 residues: Probable calcium-binding protein CML21 (231 aa).

4 EF-hand domains span residues 54-89, 90-125, 145-180, and 181-216; these read DGLR…LEIS, FDEE…VYLL, PTFE…SGER, and SSGR…WVGI. Residues Asp67, Asp69, Asn71, Ser73, and Glu78 each coordinate Ca(2+). Residues Asp158, Asn160, Asp162, Tyr164, Glu169, Asp194, Asp196, Asn198, Met200, and Glu205 each contribute to the Ca(2+) site.

In terms of biological role, potential calcium sensor. The polypeptide is Probable calcium-binding protein CML21 (CML21) (Arabidopsis thaliana (Mouse-ear cress)).